A 235-amino-acid polypeptide reads, in one-letter code: MIKTLPAFWAVIPAAGVGARMAADRPKQYLQLGGQTLLEHSLDCFLGHPTLKGVVVSIAADDPYWPGLRCASDPRIQRASGGRERADSVLNALLLLHAQDAADTDWVLVHDAARPNLARTDLDRLLSELADDPVGGLLAVPARDTLKRADANGRVSATVDRSTIWQAYTPQMFRLGALHRALAECLVSDVVVTDEASAIEWSGQAPRLIEGRSDNIKVTRPEDLEWLRQRWAGRR.

Belongs to the IspD/TarI cytidylyltransferase family. IspD subfamily.

It catalyses the reaction 2-C-methyl-D-erythritol 4-phosphate + CTP + H(+) = 4-CDP-2-C-methyl-D-erythritol + diphosphate. It participates in isoprenoid biosynthesis; isopentenyl diphosphate biosynthesis via DXP pathway; isopentenyl diphosphate from 1-deoxy-D-xylulose 5-phosphate: step 2/6. In terms of biological role, catalyzes the formation of 4-diphosphocytidyl-2-C-methyl-D-erythritol from CTP and 2-C-methyl-D-erythritol 4-phosphate (MEP). This is 2-C-methyl-D-erythritol 4-phosphate cytidylyltransferase from Pseudomonas putida (strain W619).